We begin with the raw amino-acid sequence, 222 residues long: L-serine dehydratase, beta chain (222 aa).

Residues 150–222 (TILLEYPEQR…RFTTAKYVEV (73 aa)) enclose the ACT domain.

This sequence belongs to the iron-sulfur dependent L-serine dehydratase family. As to quaternary structure, heterooctamer of four alpha chains and four beta chains. [4Fe-4S] cluster is required as a cofactor.

The enzyme catalyses L-serine = pyruvate + NH4(+). It participates in carbohydrate biosynthesis; gluconeogenesis. The chain is L-serine dehydratase, beta chain (sdhB) from Peptoniphilus asaccharolyticus (Peptostreptococcus asaccharolyticus).